Consider the following 93-residue polypeptide: Alpha-defensin 6/12 (93 aa).

A signal peptide spans M1 to A19. Positions D20 to R60 are excised as a propeptide. The segment at Q23–L54 is disordered. Disulfide bonds link C64-C92, C66-C81, and C71-C91.

This sequence belongs to the alpha-defensin family. Paneth cells of the small bowel.

It is found in the secreted. Functionally, has broad-spectrum antimicrobial properties. Has antibacterial activity against the Gram-positive bacterium L.monocytogenes EGD and the Gram-negative bacteria E.coli ML-35p and avirulent S.typhimurium 7953, but not against the mouse-virulent S.typhimurium 14028S. Probably contributes to the antimicrobial barrier function of the small bowel mucosa. The protein is Alpha-defensin 6/12 (Defa6) of Mus musculus (Mouse).